We begin with the raw amino-acid sequence, 294 residues long: Ribosomal RNA small subunit methyltransferase H (294 aa).

S-adenosyl-L-methionine-binding positions include Gly31–Tyr33, Asp49, Phe76, Asp97, and Gln104.

It belongs to the methyltransferase superfamily. RsmH family.

The protein resides in the cytoplasm. The enzyme catalyses cytidine(1402) in 16S rRNA + S-adenosyl-L-methionine = N(4)-methylcytidine(1402) in 16S rRNA + S-adenosyl-L-homocysteine + H(+). Functionally, specifically methylates the N4 position of cytidine in position 1402 (C1402) of 16S rRNA. The sequence is that of Ribosomal RNA small subunit methyltransferase H from Wolbachia pipientis subsp. Culex pipiens (strain wPip).